The chain runs to 208 residues: MSAILKLLEYCLGRLFYRRRGYDAQLFYKSAAFAKHSSPTIPITSPDCGKTGAILTTEYSKFGSGKIPQFTWPAAAPDVKEFLMLCEDPDAPMGHPNVHGIYCFIPPTVTSFGPTDLELIKEVDGVKVLESGYRVGKNRRNVVYIAPRPPLGHGPHRYLFELVALSEKLDPEGISKVPDKGEIEKAIEGKVASWGLWEATYESTWDRK.

Belongs to the tstB family.

Its function is as follows. Phosphatidylethanolamine-binding protein; part of the gene cluster that mediates the biosynthesis of the antihypercholesterolemic agents phomoidrides which are dimeric anhydrides. Within the pathway, phiB is not essential for dimerization and its function has still to be determined. The pathway begins with the highly reducing polyketide synthase phiA that catalyzes the formation of a C12-fatty acyl-ACP, starting from one acetate and 5 malonate units. The hydrolase phiM is involved in the release of the C12-fatty acyl chain from phiA. The alkylcitrate synthase (ACS) phiJ and the alkylcitrate dehydratase (ACDH) phiI then give rise to decarboxylated monomeric anhydrides by coupling the C12-fatty acyl chain with oxalacetic acid. The cyclase phiC is responsible for the dimerization of the monomeric anhydrides which leads to the production of prephomoidride that contains the characteristic bicyclo[4.3.1]deca-1,6-diene system of phomoidrides. Iterative oxidation catalyzed by the alpha-ketoglutarate-dependent dioxygenase phiK produced then phomoidride A. Finally, the methyltransferase phiE converts phomoidride A to phomoidride B via an acetalization reaction. The phosphatidylethanolamine-binding protein phiB and phiN are not essential for dimerization and their functions have still to be determined. The sequence is that of Phomoidride biosynthesis cluster protein B from Fungal sp. (strain ATCC 74256).